The sequence spans 747 residues: UPF0313 protein PA4928 (747 aa).

The 270-residue stretch at 371-640 (AYEMIRFSVN…KSDQQRRLHK (270 aa)) folds into the Radical SAM core domain. Positions 385, 389, and 392 each coordinate [4Fe-4S] cluster. Residues 670 to 747 (GKHHLVPTYQ…KKSRQPNIPR (78 aa)) form a disordered region.

Belongs to the UPF0313 family. [4Fe-4S] cluster is required as a cofactor.

The sequence is that of UPF0313 protein PA4928 from Pseudomonas aeruginosa (strain ATCC 15692 / DSM 22644 / CIP 104116 / JCM 14847 / LMG 12228 / 1C / PRS 101 / PAO1).